Consider the following 575-residue polypeptide: 2-succinyl-5-enolpyruvyl-6-hydroxy-3-cyclohexene-1-carboxylate synthase (575 aa).

The protein belongs to the TPP enzyme family. MenD subfamily. As to quaternary structure, homodimer. Requires Mg(2+) as cofactor. It depends on Mn(2+) as a cofactor. Thiamine diphosphate serves as cofactor.

The enzyme catalyses isochorismate + 2-oxoglutarate + H(+) = 5-enolpyruvoyl-6-hydroxy-2-succinyl-cyclohex-3-ene-1-carboxylate + CO2. It participates in quinol/quinone metabolism; 1,4-dihydroxy-2-naphthoate biosynthesis; 1,4-dihydroxy-2-naphthoate from chorismate: step 2/7. Its pathway is quinol/quinone metabolism; menaquinone biosynthesis. Its function is as follows. Catalyzes the thiamine diphosphate-dependent decarboxylation of 2-oxoglutarate and the subsequent addition of the resulting succinic semialdehyde-thiamine pyrophosphate anion to isochorismate to yield 2-succinyl-5-enolpyruvyl-6-hydroxy-3-cyclohexene-1-carboxylate (SEPHCHC). This chain is 2-succinyl-5-enolpyruvyl-6-hydroxy-3-cyclohexene-1-carboxylate synthase, found in Syntrophus aciditrophicus (strain SB).